The sequence spans 240 residues: MAENVLSAQKRTEQGKGPARRLRQQGLIPAVVYGGKREPTHVALDPATLLKAIETPHKFNTLLELQVDGASKHVLFKDYTVDPVTRKLLHADFLEVSLDQPVRVEVPVATVGRAAGVAEGGILSVATHEVVVEALPNKIPVRIEVDVTELKIGRSLHVSELKPPEGCKFKFQTDYVVVFVAVPEKEEVAAPVAAAVPGAAPAEGAAPAAGAAAPAGGAAPAAGAAPAKGGEAKGGDKAKK.

Disordered stretches follow at residues 1 to 20 (MAEN…GPAR) and 204 to 240 (GAAP…KAKK). Residues 204-229 (GAAPAAGAAAPAGGAAPAAGAAPAKG) show a composition bias toward low complexity. Basic and acidic residues predominate over residues 230–240 (GEAKGGDKAKK).

It belongs to the bacterial ribosomal protein bL25 family. CTC subfamily. As to quaternary structure, part of the 50S ribosomal subunit; part of the 5S rRNA/L5/L18/L25 subcomplex. Contacts the 5S rRNA. Binds to the 5S rRNA independently of L5 and L18.

This is one of the proteins that binds to the 5S RNA in the ribosome where it forms part of the central protuberance. The polypeptide is Large ribosomal subunit protein bL25 (Anaeromyxobacter sp. (strain K)).